The following is a 399-amino-acid chain: Putative glutamate--cysteine ligase 2 (399 aa).

The interval 377–399 (PAVGSSHGRTDPSRNGGPSHAGA) is disordered.

This sequence belongs to the glutamate--cysteine ligase type 2 family. YbdK subfamily.

It carries out the reaction L-cysteine + L-glutamate + ATP = gamma-L-glutamyl-L-cysteine + ADP + phosphate + H(+). Functionally, ATP-dependent carboxylate-amine ligase which exhibits weak glutamate--cysteine ligase activity. The sequence is that of Putative glutamate--cysteine ligase 2 from Thermobifida fusca (strain YX).